The sequence spans 1058 residues: Isoleucine--tRNA ligase (1058 aa).

A 'HIGH' region motif is present at residues 48-58; that stretch reads PYTTGHIHLGT. A 'KMSKS' region motif is present at residues 596 to 600; the sequence is KMSKS. ATP is bound at residue lysine 599.

The protein belongs to the class-I aminoacyl-tRNA synthetase family. IleS type 2 subfamily. In terms of assembly, monomer. The cofactor is Zn(2+).

It is found in the cytoplasm. It catalyses the reaction tRNA(Ile) + L-isoleucine + ATP = L-isoleucyl-tRNA(Ile) + AMP + diphosphate. Its function is as follows. Catalyzes the attachment of isoleucine to tRNA(Ile). As IleRS can inadvertently accommodate and process structurally similar amino acids such as valine, to avoid such errors it has two additional distinct tRNA(Ile)-dependent editing activities. One activity is designated as 'pretransfer' editing and involves the hydrolysis of activated Val-AMP. The other activity is designated 'posttransfer' editing and involves deacylation of mischarged Val-tRNA(Ile). The chain is Isoleucine--tRNA ligase from Methanosarcina mazei (strain ATCC BAA-159 / DSM 3647 / Goe1 / Go1 / JCM 11833 / OCM 88) (Methanosarcina frisia).